Reading from the N-terminus, the 339-residue chain is Deoxyguanosinetriphosphate triphosphohydrolase-like protein (339 aa).

One can recognise an HD domain in the interval 75-186; the sequence is RLTHTLEVAQ…VQISDKIAYI (112 aa).

Belongs to the dGTPase family. Type 2 subfamily.

The protein is Deoxyguanosinetriphosphate triphosphohydrolase-like protein of Caldanaerobacter subterraneus subsp. tengcongensis (strain DSM 15242 / JCM 11007 / NBRC 100824 / MB4) (Thermoanaerobacter tengcongensis).